Reading from the N-terminus, the 188-residue chain is Putative manganese efflux pump MntP (188 aa).

Helical transmembrane passes span 3-23 (FYAL…VALA), 35-55 (IAAT…AGWV), 63-83 (FISE…GLKM), 104-126 (WMTV…GLAF), 140-160 (MATT…GVLF), and 167-187 (AGGL…LGLI).

The protein belongs to the MntP (TC 9.B.29) family.

The protein localises to the cell inner membrane. Its function is as follows. Probably functions as a manganese efflux pump. The chain is Putative manganese efflux pump MntP from Neisseria meningitidis serogroup B (strain ATCC BAA-335 / MC58).